Consider the following 345-residue polypeptide: Dihydroorotase (345 aa).

Residues histidine 14 and histidine 16 each coordinate Zn(2+). Residues 16–18 (HLR) and asparagine 42 contribute to the substrate site. Zn(2+) contacts are provided by lysine 100, histidine 137, and histidine 175. An N6-carboxylysine modification is found at lysine 100. Histidine 137 contributes to the substrate binding site. Leucine 220 contributes to the substrate binding site. Aspartate 248 contacts Zn(2+). Residue aspartate 248 is part of the active site. Residues histidine 252 and alanine 264 each coordinate substrate.

Belongs to the metallo-dependent hydrolases superfamily. DHOase family. Class II DHOase subfamily. As to quaternary structure, homodimer. Requires Zn(2+) as cofactor.

It carries out the reaction (S)-dihydroorotate + H2O = N-carbamoyl-L-aspartate + H(+). It participates in pyrimidine metabolism; UMP biosynthesis via de novo pathway; (S)-dihydroorotate from bicarbonate: step 3/3. Functionally, catalyzes the reversible cyclization of carbamoyl aspartate to dihydroorotate. This chain is Dihydroorotase, found in Nitrosococcus oceani (strain ATCC 19707 / BCRC 17464 / JCM 30415 / NCIMB 11848 / C-107).